A 626-amino-acid chain; its full sequence is tRNA uridine 5-carboxymethylaminomethyl modification enzyme MnmG (626 aa).

Residue 13–18 participates in FAD binding; that stretch reads GGGHAG. Residue 273-287 coordinates NAD(+); it reads GPRYCPSIEDKIHRF.

Belongs to the MnmG family. Homodimer. Heterotetramer of two MnmE and two MnmG subunits. Requires FAD as cofactor.

The protein localises to the cytoplasm. Its function is as follows. NAD-binding protein involved in the addition of a carboxymethylaminomethyl (cmnm) group at the wobble position (U34) of certain tRNAs, forming tRNA-cmnm(5)s(2)U34. This Acinetobacter baumannii (strain SDF) protein is tRNA uridine 5-carboxymethylaminomethyl modification enzyme MnmG.